Reading from the N-terminus, the 199-residue chain is Chaperone protein TorD (199 aa).

Belongs to the TorD/DmsD family. TorD subfamily.

Its subcellular location is the cytoplasm. In terms of biological role, involved in the biogenesis of TorA. Acts on TorA before the insertion of the molybdenum cofactor and, as a result, probably favors a conformation of the apoenzyme that is competent for acquiring the cofactor. This Escherichia coli (strain ATCC 8739 / DSM 1576 / NBRC 3972 / NCIMB 8545 / WDCM 00012 / Crooks) protein is Chaperone protein TorD.